Here is a 182-residue protein sequence, read N- to C-terminus: UPF0587 protein YCR090C (182 aa).

Zn(2+) contacts are provided by Cys36, Cys39, Cys70, and Cys73.

Belongs to the UPF0587 family.

The polypeptide is UPF0587 protein YCR090C (Saccharomyces cerevisiae (strain ATCC 204508 / S288c) (Baker's yeast)).